Here is a 457-residue protein sequence, read N- to C-terminus: Acetylcholine receptor subunit alpha (457 aa).

The first 20 residues, 1–20 (MEPWPLLLLFSLCSAGLVLG), serve as a signal peptide directing secretion. Over 21-232 (SEHETRLVAK…YHFVMQRLPL (212 aa)) the chain is Extracellular. Intrachain disulfides connect Cys-148-Cys-162 and Cys-212-Cys-213. Asn-161 carries an N-linked (GlcNAc...) asparagine glycan. Residues 233–253 (YFIVNVIIPCLLFSFLTGLVF) traverse the membrane as a helical segment. Residues 254 to 264 (YLPTDSGEKMT) are Cytoplasmic-facing. Residues 265 to 285 (LSISVLLSLTVFLLVIVELIP) form a helical membrane-spanning segment. Topologically, residues 286–296 (STSSAVPLIGK) are extracellular. A helical membrane pass occupies residues 297 to 317 (YMLFTMVFVIASIIITVIVIN). The Cytoplasmic segment spans residues 318-427 (THHRSPSTHV…EWKYVAMVMD (110 aa)). Residues 428–448 (HILLGVFMLVCIIGTLAVFAG) traverse the membrane as a helical segment. Over 449–457 (RLIELNQQG) the chain is Extracellular.

It belongs to the ligand-gated ion channel (TC 1.A.9) family. Acetylcholine receptor (TC 1.A.9.1) subfamily. Alpha-1/CHRNA1 sub-subfamily. In terms of assembly, one of the alpha chains that assemble within the acetylcholine receptor, a pentamer of two alpha chains, a beta, a delta, and a gamma (in immature muscle) or epsilon (in mature muscle) chains. The muscle heteropentamer composed of alpha-1, beta-1, delta, epsilon subunits interacts with the alpha-conotoxin ImII. As to quaternary structure, is able to interact with other subunits of the acetylcholine receptor but is not assembled into functional acetylcholine-gated cation-selective channels. Isoform 1 is only expressed in skeletal muscle. Isoform 2 is constitutively expressed in skeletal muscle, brain, heart, kidney, liver, lung and thymus.

It localises to the postsynaptic cell membrane. The protein resides in the cell membrane. It carries out the reaction K(+)(in) = K(+)(out). The catalysed reaction is Na(+)(in) = Na(+)(out). In terms of biological role, upon acetylcholine binding, the AChR responds by an extensive change in conformation that affects all subunits and leads to opening of an ion-conducting channel across the plasma membrane. Functionally, non functional acetylcholine receptor alpha subunit which is not integrated into functional acetylcholine-gated cation-selective channels. The chain is Acetylcholine receptor subunit alpha from Homo sapiens (Human).